Reading from the N-terminus, the 204-residue chain is Salt stress root protein RS1 (204 aa).

A disordered region spans residues 128–204; sequence FVPKEEPKPE…AAPAAEPEKQ (77 aa). Residues 147-161 show a composition bias toward basic and acidic residues; it reads TSREVAVEEEKKEEE. The span at 164–180 shows a compositional bias: low complexity; sequence PAEPAAAAAEAAAPSTE. A compositionally biased stretch (basic and acidic residues) spans 182 to 192; that stretch reads VEEKKEEEKPA. The span at 193 to 204 shows a compositional bias: low complexity; sequence EAAAPAAEPEKQ.

This sequence belongs to the DREPP family.

The sequence is that of Salt stress root protein RS1 from Oryza sativa subsp. indica (Rice).